Consider the following 436-residue polypeptide: Adenylosuccinate synthetase (436 aa).

Residues 13–19 (GDEGKGK) and 41–43 (GHT) each bind GTP. The active-site Proton acceptor is D14. The Mg(2+) site is built by D14 and G41. Residues 14–17 (DEGK), 39–42 (NAGH), T131, R145, Q226, T241, and R309 contribute to the IMP site. The Proton donor role is filled by H42. A substrate-binding site is contributed by 305-311 (TVTGRKR). GTP contacts are provided by residues R311, 337-339 (KLD), and 419-421 (STG).

It belongs to the adenylosuccinate synthetase family. As to quaternary structure, homodimer. Requires Mg(2+) as cofactor.

The protein resides in the cytoplasm. The enzyme catalyses IMP + L-aspartate + GTP = N(6)-(1,2-dicarboxyethyl)-AMP + GDP + phosphate + 2 H(+). The protein operates within purine metabolism; AMP biosynthesis via de novo pathway; AMP from IMP: step 1/2. Its function is as follows. Plays an important role in the de novo pathway of purine nucleotide biosynthesis. Catalyzes the first committed step in the biosynthesis of AMP from IMP. The protein is Adenylosuccinate synthetase of Aromatoleum aromaticum (strain DSM 19018 / LMG 30748 / EbN1) (Azoarcus sp. (strain EbN1)).